Consider the following 366-residue polypeptide: Left-right determination factor 1 (366 aa).

Positions M1 to A21 are cleaved as a signal peptide. The propeptide at L22–K76 is or 135. Residue N158 is glycosylated (N-linked (GlcNAc...) asparagine). 4 cysteine pairs are disulfide-bonded: C251–C264, C263–C316, C293–C351, and C297–C353.

The protein belongs to the TGF-beta family. In terms of processing, the processing of the protein may also occur at the second R-X-X-R site located at AA 132-135. Processing appears to be regulated in a cell-type specific manner.

The protein resides in the secreted. Its function is as follows. Required for left-right axis determination as a regulator of LEFTY2 and NODAL. This is Left-right determination factor 1 (LEFTY1) from Homo sapiens (Human).